We begin with the raw amino-acid sequence, 1179 residues long: Stress response protein NST1 (1179 aa).

7 disordered regions span residues 1–64, 147–189, 255–351, 537–619, 660–819, 928–947, and 957–997; these read MSET…LNDP, TVNT…SNSS, KRQQ…NHSH, AAWI…EEEK, EAEE…DISQ, SSQAFNANTQAPPVYQPQLS, and SLSQ…VWNP. The span at 10 to 22 shows a compositional bias: basic and acidic residues; it reads DVSKFKNGDDVHF. Residues 24-38 are compositionally biased toward polar residues; sequence YNSTTNDQTINSTNV. Residues 39-53 show a composition bias toward basic residues; sequence QKKKKKKKSKNKHKG. Residues 149-178 show a composition bias toward low complexity; sequence NTSNNHQNNSNTQGGSTSTSGGALNGSSTN. Basic and acidic residues predominate over residues 262–278; the sequence is YKQERDAHHDHHNHEPG. A compositionally biased stretch (low complexity) spans 282-299; the sequence is SDTGSSGDYDGSTQQDQQ. Over residues 300-347 the composition is skewed to basic and acidic residues; it reads HQYEHEIEHAFQEDEHEDECGHKNDHSHSHSHSHTENHNHSHSYDPNH. Positions 564–616 are enriched in acidic residues; the sequence is ELEEELNDEYDEVDEDDDEGEEEGEEEEEELDDEEFEEDEEEDASDTESEISE. Positions 648-810 form a coiled coil; it reads SQDRTRTLIE…KSAKKQDHKE (163 aa). Composition is skewed to basic and acidic residues over residues 663–681 and 690–812; these read ENAKKEREMKKLRQKEKAK and AKEE…KETG. The segment covering 957 to 977 has biased composition (low complexity); it reads SLSQNSLSSNANENLNTNPLN.

This sequence belongs to the NST1 family.

The protein localises to the cytoplasm. Its function is as follows. May act as a negative regulator of salt tolerance. The protein is Stress response protein NST1 (NST1) of Debaryomyces hansenii (strain ATCC 36239 / CBS 767 / BCRC 21394 / JCM 1990 / NBRC 0083 / IGC 2968) (Yeast).